The chain runs to 373 residues: Indole glucosinolate O-methyltransferase 4 (373 aa).

5 residues coordinate S-adenosyl-L-homocysteine: glycine 217, aspartate 240, aspartate 260, methionine 261, and lysine 274. Residue histidine 278 is the Proton acceptor of the active site.

The protein belongs to the class I-like SAM-binding methyltransferase superfamily. Cation-independent O-methyltransferase family. As to quaternary structure, interacts with B'GAMMA.

Its pathway is secondary metabolite biosynthesis. Functionally, involved in indole glucosinolate biosynthesis. Catalyzes methoxylation reactions of the glucosinolate indole ring. Converts the hydroxy intermediates 4-hydroxy-indol-3-yl-methylglucosinolate (4OH-I3M) and 1-hydroxy-indol-3-yl-methylglucosinolate (1OH-I3M) to 4-methoxy-indol-3-yl-methylglucosinolate (4MO-I3M) and 1-methoxy-indol-3-yl-methylglucosinolate(1MO-I3M), respectively. This chain is Indole glucosinolate O-methyltransferase 4, found in Arabidopsis thaliana (Mouse-ear cress).